Consider the following 605-residue polypeptide: Protein kinase wis1 (605 aa).

The span at 1–20 (MSSPNNQPLSCSLRQLSISP) shows a compositional bias: polar residues. The tract at residues 1–141 (MSSPNNQPLS…TPPGPFPGGL (141 aa)) is disordered. Low complexity-rich tracts occupy residues 31-73 (GSLL…SSPS) and 90-105 (RLGR…SLNL). A compositionally biased stretch (basic and acidic residues) spans 106-115 (DMKDPSEKPR). A Phosphoserine modification is found at Ser168. Polar residues predominate over residues 188 to 200 (SQLAGRLSNSPVK). A disordered region spans residues 188–263 (SQLAGRLSNS…PSSMASRRGL (76 aa)). Low complexity predominate over residues 244-256 (SNSNPTSPVSPSS). Residue Ser253 is modified to Phosphoserine. The Protein kinase domain maps to 320–579 (IIKLEELGKG…YHELANHPWL (260 aa)). Residues 326–334 (LGKGNYGVV) and Lys349 each bind ATP. Asp441 acts as the Proton acceptor in catalysis. Ser469 is modified (phosphoserine). Phosphothreonine is present on Thr473.

The protein belongs to the protein kinase superfamily. STE Ser/Thr protein kinase family. MAP kinase kinase subfamily. Dephosphorylated by pyp1 and pyp2.

The enzyme catalyses L-seryl-[protein] + ATP = O-phospho-L-seryl-[protein] + ADP + H(+). It catalyses the reaction L-threonyl-[protein] + ATP = O-phospho-L-threonyl-[protein] + ADP + H(+). The catalysed reaction is L-tyrosyl-[protein] + ATP = O-phospho-L-tyrosyl-[protein] + ADP + H(+). Its function is as follows. Dosage-dependent regulator of mitosis with serine/ threonine protein kinase activity. May play a role in the integration of nutritional sensing with the control over entry into mitosis. It may interact with cdc25, wee1 and win1. May activate sty1. In Schizosaccharomyces pombe (strain 972 / ATCC 24843) (Fission yeast), this protein is Protein kinase wis1 (wis1).